We begin with the raw amino-acid sequence, 175 residues long: METWRKGSFRNASFFKQLSLGRPRRLRRQSSVLSQASTAGGDHEEYSNREVIRELQGRPDGRRLPLWGDEQPRATLLAPPKPPRLYRESSSCPNILEPPPAYTAAYSATLPSALSLSSALHQHSEKGLVDTPCFQRTPTPDLSDPFLSFKVDLGISLLEEVLQMLREQFPSEPSF.

The transit peptide at 1–11 (METWRKGSFRN) directs the protein to the mitochondrion. Residues 24 to 92 (RRLRRQSSVL…PRLYRESSSC (69 aa)) form a disordered region. A compositionally biased stretch (basic and acidic residues) spans 41 to 63 (GDHEEYSNREVIRELQGRPDGRR).

It localises to the mitochondrion. This is an uncharacterized protein from Homo sapiens (Human).